Here is a 226-residue protein sequence, read N- to C-terminus: Protein BASIC PENTACYSTEINE7 (226 aa).

The segment at 42–116 is disordered; that stretch reads IDLSQEPPAE…PSIPETKREK (75 aa). Residues 66–76 are compositionally biased toward basic and acidic residues; the sequence is RDSRNDTETVK. Residues 88–105 are compositionally biased toward basic residues; it reads LKPKPQRKKRSVSNKSKK.

The protein belongs to the BBR/BPC family. In terms of tissue distribution, expressed in seedlings, leaves and pistils. Detected in anthers, in pollen grains, in young rosette, in leaf vasculature, in the lateral and primary roots, in embryo sac, and in the whole ovule.

Its subcellular location is the nucleus. Transcriptional regulator that specifically binds to GA-rich elements (GAGA-repeats) present in regulatory sequences of genes involved in developmental processes. This Arabidopsis thaliana (Mouse-ear cress) protein is Protein BASIC PENTACYSTEINE7 (BPC7).